Here is a 129-residue protein sequence, read N- to C-terminus: Small ribosomal subunit protein uS11 (129 aa).

The protein belongs to the universal ribosomal protein uS11 family. Part of the 30S ribosomal subunit. Interacts with proteins S7 and S18. Binds to IF-3.

Functionally, located on the platform of the 30S subunit, it bridges several disparate RNA helices of the 16S rRNA. Forms part of the Shine-Dalgarno cleft in the 70S ribosome. This Nitratidesulfovibrio vulgaris (strain ATCC 29579 / DSM 644 / CCUG 34227 / NCIMB 8303 / VKM B-1760 / Hildenborough) (Desulfovibrio vulgaris) protein is Small ribosomal subunit protein uS11.